A 276-amino-acid chain; its full sequence is Krueppel homolog 2 (276 aa).

The segment at 1–37 (MSAPTDQPPRSEGAQTNSSERSSQQQEQPQQSQSQNV) is disordered. The span at 18–35 (SSERSSQQQEQPQQSQSQ) shows a compositional bias: low complexity. S22 carries the post-translational modification Phosphoserine. Helical transmembrane passes span 53–73 (ALWA…LPIF), 125–145 (LIFF…LYSV), and 181–201 (ILKA…VLAF).

The protein belongs to the PER33/POM33 family.

The protein localises to the membrane. Functionally, member of the dosage-dependent hierarchy effective upon white gene expression. This Drosophila melanogaster (Fruit fly) protein is Krueppel homolog 2 (Kr-h2).